The sequence spans 4731 residues: Dynein axonemal heavy chain 8 (4731 aa).

The tract at residues 1 to 145 (MESEEGNAEP…SKFRRSMTGI (145 aa)) is disordered. Residues 9-55 (EPPPPSEEAPPPVVEEAPPPLPPEDTAPPPPEEQAPPPEGDAAPPPT) show a composition bias toward pro residues. Residues 66–75 (EAPHPEDPKL) are compositionally biased toward basic and acidic residues. A compositionally biased stretch (acidic residues) spans 94–106 (SDEEVTLPEDEES). Residues 122 to 133 (SVLSDGISQSSR) show a composition bias toward polar residues. A coiled-coil region spans residues 145–169 (IPNLQETLKEKQARFREARENRKMK). At Ser-917 the chain carries Phosphoserine. Positions 1177–1201 (FQNNSRGSDQPPASGKPLKKEERSF) are disordered. The stretch at 1543-1567 (DVDIEKINAELQEFQNRCRKLPRAL) forms a coiled coil. AAA stretches follow at residues 2049-2271 (YQNE…VLRT), 2331-2550 (SAVD…KLSL), 2657-2910 (FYPT…IWQG), and 3021-3275 (QFNE…YRRR). ATP is bound by residues 2087 to 2094 (GPAGTGKT) and 2369 to 2376 (GPSGSGKT). The interval 3290-3587 (YKSIYTDKVK…MDLLNDADMC (298 aa)) is stalk. Coiled coils occupy residues 3313–3405 (DKLM…ALNT), 3531–3583 (LKAN…LLND), and 3836–3871 (RVIL…DNLL). 2 AAA regions span residues 3673-3903 (LVDP…EVSE) and 4118-4332 (ARKY…FIQN).

This sequence belongs to the dynein heavy chain family. As to quaternary structure, consists of at least two heavy chains and a number of intermediate and light chains. Isoform 1 and/or isoform 2 are expressed in spermatocytes and mature sperm (at protein level). Testis-specific. Accumulates exclusively in mid to late spermatocytes.

The protein localises to the cytoplasm. Its subcellular location is the cytoskeleton. It is found in the flagellum axoneme. Its function is as follows. Force generating protein component of the outer dynein arms (ODAs) in the sperm flagellum. Produces force towards the minus ends of microtubules. Dynein has ATPase activity; the force-producing power stroke is thought to occur on release of ADP. Involved in sperm motility; implicated in sperm flagellar assembly. In Mus musculus (Mouse), this protein is Dynein axonemal heavy chain 8 (Dnah8).